Here is a 277-residue protein sequence, read N- to C-terminus: Thiazole synthase (277 aa).

The Schiff-base intermediate with DXP role is filled by K119. Residues G180, 206–207 (AG), and 228–229 (NT) contribute to the 1-deoxy-D-xylulose 5-phosphate site.

The protein belongs to the ThiG family. As to quaternary structure, homotetramer. Forms heterodimers with either ThiH or ThiS.

The protein resides in the plastid. It localises to the chloroplast. It catalyses the reaction [ThiS sulfur-carrier protein]-C-terminal-Gly-aminoethanethioate + 2-iminoacetate + 1-deoxy-D-xylulose 5-phosphate = [ThiS sulfur-carrier protein]-C-terminal Gly-Gly + 2-[(2R,5Z)-2-carboxy-4-methylthiazol-5(2H)-ylidene]ethyl phosphate + 2 H2O + H(+). Its pathway is cofactor biosynthesis; thiamine diphosphate biosynthesis. Catalyzes the rearrangement of 1-deoxy-D-xylulose 5-phosphate (DXP) to produce the thiazole phosphate moiety of thiamine. Sulfur is provided by the thiocarboxylate moiety of the carrier protein ThiS. In vitro, sulfur can be provided by H(2)S. This chain is Thiazole synthase, found in Pyropia yezoensis (Susabi-nori).